We begin with the raw amino-acid sequence, 997 residues long: FHIP family protein CPIJ015043 (997 aa).

2 disordered regions span residues 558-579 (DHRS…QQLQ) and 759-922 (NVVL…GGAA). Low complexity predominate over residues 569–579 (QQHLHQQQQLQ). A compositionally biased stretch (gly residues) spans 763 to 780 (GGSGPGGPRLSNGGGGTG). Composition is skewed to low complexity over residues 781-792 (SSITSSLSQTTP) and 830-889 (GSNS…MVGS). Residues 911 to 922 (IGSGTVGGGGAA) are compositionally biased toward gly residues.

Belongs to the FHIP family.

The chain is FHIP family protein CPIJ015043 from Culex quinquefasciatus (Southern house mosquito).